Reading from the N-terminus, the 266-residue chain is MAAAVAAAARGCWQRLVGSAAPARVAGRPSVLLLPVRRESSAADTRPTVRPRNDVAHKQLSAFGEYVAEILPKYVQQVQVSCFNELEICIHPDGVIPVLTFLRDHSNAQFKSLADLTAVDIPTRQNRFEIVYNLLSLRFNSRIRVKTYTDELTPIESSVPVYKAANWYEREIWDMFGVFFANHPDLRRILTDYGFEGHPFRKDFPLSGYVELRYDDEVKRVVAEPVELAQEFRKFDLNSPWEAFPAYRQPPESLKLEAGDTKPEAK.

A mitochondrion-targeting transit peptide spans M1–R38.

Belongs to the complex I 30 kDa subunit family. As to quaternary structure, core subunit of respiratory chain NADH dehydrogenase (Complex I) which is composed of 45 different subunits. Interacts with NDUFAF3. Interacts with RAB5IF. Found in subcomplexes containing subunits NDUFS2, MT-ND1 and NDUFA13.

The protein localises to the mitochondrion inner membrane. The catalysed reaction is a ubiquinone + NADH + 5 H(+)(in) = a ubiquinol + NAD(+) + 4 H(+)(out). Its function is as follows. Core subunit of the mitochondrial membrane respiratory chain NADH dehydrogenase (Complex I) which catalyzes electron transfer from NADH through the respiratory chain, using ubiquinone as an electron acceptor. Essential for the catalytic activity and assembly of complex I. This chain is NADH dehydrogenase [ubiquinone] iron-sulfur protein 3, mitochondrial (NDUFS3), found in Bos taurus (Bovine).